The primary structure comprises 445 residues: Potassium/proton antiporter CemA (445 aa).

4 consecutive transmembrane segments (helical) span residues 44 to 64 (MQVSVVTFLTLVLVPLGVNIC), 330 to 350 (ALTCITITFLFFGLKVQILIL), 368 to 388 (LIIIIVTDLLVGYHSPQGWKL), and 405 to 425 (FILCFIGTFPVILDTIFKYWI).

It belongs to the CemA family.

The protein localises to the plastid. It is found in the chloroplast inner membrane. It catalyses the reaction K(+)(in) + H(+)(out) = K(+)(out) + H(+)(in). Its function is as follows. Contributes to K(+)/H(+) antiport activity by supporting proton efflux to control proton extrusion and homeostasis in chloroplasts in a light-dependent manner to modulate photosynthesis. Prevents excessive induction of non-photochemical quenching (NPQ) under continuous-light conditions. Indirectly promotes efficient inorganic carbon uptake into chloroplasts. This chain is Potassium/proton antiporter CemA, found in Pleurastrum terricola (Filamentous green alga).